The chain runs to 71 residues: uncharacterized protein (71 aa).

This is an uncharacterized protein from Archaeoglobus fulgidus (strain ATCC 49558 / DSM 4304 / JCM 9628 / NBRC 100126 / VC-16).